The primary structure comprises 399 residues: O-glucosyltransferase rumi homolog (399 aa).

Residues 1-18 (MHFIIGIVICLSLSVIQS) form the signal peptide. N19 and N67 each carry an N-linked (GlcNAc...) asparagine glycan. 4 cysteine pairs are disulfide-bonded: C66/C73, C71/C373, C118/C124, and C277/C300. D149 serves as the catalytic Proton donor/acceptor. Residues 189 to 194 (AIALYP) form an interaction with the consensus sequence C-X-S-X-[PA]-C in peptide substrates region. UDP-alpha-D-glucose-binding positions include 224–228 (RGSRT), R232, 271–273 (VTL), and 289–293 (AASFR).

It belongs to the glycosyltransferase 90 family.

The protein resides in the endoplasmic reticulum lumen. It localises to the secreted. The protein operates within protein modification; protein glycosylation. Functionally, protein O-glucosyltransferase. Catalyzes the reaction that attaches glucose through an O-glycosidic linkage to a conserved serine residue found in the consensus sequence C-X-S-X-[PA]-C in epidermal growth factor-like repeats. Regulates Notch signaling by glucosylating Notch in the ER, glucosylation is required for the correct folding and cleavage of Notch. In Anopheles gambiae (African malaria mosquito), this protein is O-glucosyltransferase rumi homolog.